The primary structure comprises 524 residues: 3-epi-6-deoxocathasterone 23-monooxygenase CYP90C1 (524 aa).

The chain crosses the membrane as a helical span at residues 25-45 (YLVAGFLVLTAGILLRPWLWL). Residue cysteine 463 participates in heme binding.

Belongs to the cytochrome P450 family. Heme serves as cofactor. In terms of tissue distribution, widely expressed.

It is found in the endoplasmic reticulum membrane. It catalyses the reaction 3-epi-6-deoxocathasterone + reduced [NADPH--hemoprotein reductase] + O2 = 6-deoxotyphasterol + oxidized [NADPH--hemoprotein reductase] + H2O + H(+). The enzyme catalyses (22S,24R)-22-hydroxy-5alpha-ergostan-3-one + reduced [NADPH--hemoprotein reductase] + O2 = 3-dehydro-6-deoxoteasterone + oxidized [NADPH--hemoprotein reductase] + H2O + H(+). The protein operates within plant hormone biosynthesis; brassinosteroid biosynthesis. Functionally, involved in brassinosteroid (BR) biosynthesis. Converts typhasterol (TY) to cathasterone (CS) and 6-deoxotyphasterol (6-deoxoTY) to 6-deoxocathasterone (6-deoxoCT). C-23 hydroxylase that converts directly (22S,24R)-22-hydroxy-5-alpha-ergostan-3-one and 3-epi-6-deoxocathasterone to 3-dehydro-6-deoxoteasterone (6-deoxo3DT, 6-deoxo3DHT) and 6-deoxotyphasterol (6-deoxoTY), respectively. These C-23 hydroxylation shortcuts bypass campestanol, 6-deoxocathasterone, and 6-deoxoteasterone (6-deoxoTE). Also catalyzes the conversion of cathasterone to teasterone (TE), (22S,24R)-22-hydroxyergost-4-en-3-one (22-OH-4-en-3-one) to (22R,23R)-22,23-dihydroxy-campest-4-en-3-one (22,23-diOH-4-en-3-one) and (22S)-22-hydroxycampesterol (22-OHCR) to (22R,23R)-22,23-dihydroxycampesterol (22,23-diOHCR). Required for the regulation of polar elongation of leaf cells. Required for the longitudinal elongation of floral organs. This Arabidopsis thaliana (Mouse-ear cress) protein is 3-epi-6-deoxocathasterone 23-monooxygenase CYP90C1.